Reading from the N-terminus, the 447-residue chain is Tubulin beta-6 chain (447 aa).

Gln11, Glu69, Ser138, Gly142, Thr143, Gly144, Asn204, and Asn226 together coordinate GTP. Residue Glu69 participates in Mg(2+) binding. A disordered region spans residues 426–447 (QDATAEEEGEFDEDEELDDGMM). Residues 429 to 447 (TAEEEGEFDEDEELDDGMM) are compositionally biased toward acidic residues.

Belongs to the tubulin family. As to quaternary structure, dimer of alpha and beta chains. A typical microtubule is a hollow water-filled tube with an outer diameter of 25 nm and an inner diameter of 15 nM. Alpha-beta heterodimers associate head-to-tail to form protofilaments running lengthwise along the microtubule wall with the beta-tubulin subunit facing the microtubule plus end conferring a structural polarity. Microtubules usually have 13 protofilaments but different protofilament numbers can be found in some organisms and specialized cells. Mg(2+) is required as a cofactor.

The protein resides in the cytoplasm. The protein localises to the cytoskeleton. Functionally, tubulin is the major constituent of microtubules, a cylinder consisting of laterally associated linear protofilaments composed of alpha- and beta-tubulin heterodimers. Microtubules grow by the addition of GTP-tubulin dimers to the microtubule end, where a stabilizing cap forms. Below the cap, tubulin dimers are in GDP-bound state, owing to GTPase activity of alpha-tubulin. This chain is Tubulin beta-6 chain (TUBB6), found in Ectocarpus variabilis (Brown alga).